Reading from the N-terminus, the 212-residue chain is Deoxyribose-phosphate aldolase (212 aa).

The active-site Proton donor/acceptor is Asp89. Lys151 serves as the catalytic Schiff-base intermediate with acetaldehyde. Lys180 functions as the Proton donor/acceptor in the catalytic mechanism.

This sequence belongs to the DeoC/FbaB aldolase family. DeoC type 1 subfamily.

The protein localises to the cytoplasm. The enzyme catalyses 2-deoxy-D-ribose 5-phosphate = D-glyceraldehyde 3-phosphate + acetaldehyde. It participates in carbohydrate degradation; 2-deoxy-D-ribose 1-phosphate degradation; D-glyceraldehyde 3-phosphate and acetaldehyde from 2-deoxy-alpha-D-ribose 1-phosphate: step 2/2. Catalyzes a reversible aldol reaction between acetaldehyde and D-glyceraldehyde 3-phosphate to generate 2-deoxy-D-ribose 5-phosphate. In Clostridium botulinum (strain Loch Maree / Type A3), this protein is Deoxyribose-phosphate aldolase.